A 174-amino-acid polypeptide reads, in one-letter code: Small heat shock protein OV25-1 (174 aa).

The 112-residue stretch at 50-161 (LNECNIGNTL…ASRNIPIRAS (112 aa)) folds into the sHSP domain. Residues 153-174 (SRNIPIRASPKEPEAKQKTKKQ) are disordered. The segment covering 161–174 (SPKEPEAKQKTKKQ) has biased composition (basic and acidic residues).

Belongs to the small heat shock protein (HSP20) family.

The protein is Small heat shock protein OV25-1 (OV25-1) of Onchocerca volvulus.